The primary structure comprises 116 residues: Chorion protein S15 (116 aa).

A signal peptide spans 1–18; that stretch reads MKFLIAFAVLALVACINA.

The protein belongs to the chorion protein S15/S18 family.

Its subcellular location is the secreted. Chorion membrane (egg shell) protein; plays a role in protecting the egg from the environment. The chain is Chorion protein S15 (Cp15) from Drosophila virilis (Fruit fly).